The sequence spans 182 residues: NADH-quinone oxidoreductase subunit I (182 aa).

4Fe-4S ferredoxin-type domains follow at residues 50-82 (IILS…LQKA) and 92-121 (EFFR…MTPD). Cys-62, Cys-65, Cys-68, Cys-72, Cys-101, Cys-104, Cys-107, and Cys-111 together coordinate [4Fe-4S] cluster.

It belongs to the complex I 23 kDa subunit family. NDH-1 is composed of 14 different subunits. Subunits NuoA, H, J, K, L, M, N constitute the membrane sector of the complex. The cofactor is [4Fe-4S] cluster.

The protein resides in the cell inner membrane. The enzyme catalyses a quinone + NADH + 5 H(+)(in) = a quinol + NAD(+) + 4 H(+)(out). Its function is as follows. NDH-1 shuttles electrons from NADH, via FMN and iron-sulfur (Fe-S) centers, to quinones in the respiratory chain. The immediate electron acceptor for the enzyme in this species is believed to be ubiquinone. Couples the redox reaction to proton translocation (for every two electrons transferred, four hydrogen ions are translocated across the cytoplasmic membrane), and thus conserves the redox energy in a proton gradient. The polypeptide is NADH-quinone oxidoreductase subunit I (Psychrobacter cryohalolentis (strain ATCC BAA-1226 / DSM 17306 / VKM B-2378 / K5)).